The primary structure comprises 175 residues: MTADDWLPVGKVVAVQGLKGELRVNPASDFPERFTEPGSRWLKARGQAPREIELTSGRQLPGKSVFVVRFAGVESRDAAEALVGQTLMVPADDRPELAEGEFHLLDLVGLEARLSADGDAIGTVKDLISGGNDLLVLERPDGRTLMIPFVEAIVPDVHLEQGWLRLTPPPGLLEL.

Positions 99–172 (EGEFHLLDLV…WLRLTPPPGL (74 aa)) constitute a PRC barrel domain.

Belongs to the RimM family. In terms of assembly, binds ribosomal protein uS19.

The protein resides in the cytoplasm. An accessory protein needed during the final step in the assembly of 30S ribosomal subunit, possibly for assembly of the head region. Essential for efficient processing of 16S rRNA. May be needed both before and after RbfA during the maturation of 16S rRNA. It has affinity for free ribosomal 30S subunits but not for 70S ribosomes. The protein is Ribosome maturation factor RimM of Synechococcus sp. (strain WH7803).